Consider the following 311-residue polypeptide: tRNA dimethylallyltransferase (311 aa).

11–18 (GPTAVGKT) contacts ATP. Residue 13-18 (TAVGKT) participates in substrate binding. The interaction with substrate tRNA stretch occupies residues 36 to 39 (DSVQ).

This sequence belongs to the IPP transferase family. Monomer. Mg(2+) is required as a cofactor.

It catalyses the reaction adenosine(37) in tRNA + dimethylallyl diphosphate = N(6)-dimethylallyladenosine(37) in tRNA + diphosphate. Catalyzes the transfer of a dimethylallyl group onto the adenine at position 37 in tRNAs that read codons beginning with uridine, leading to the formation of N6-(dimethylallyl)adenosine (i(6)A). The chain is tRNA dimethylallyltransferase from Exiguobacterium sp. (strain ATCC BAA-1283 / AT1b).